A 475-amino-acid chain; its full sequence is Ribulose bisphosphate carboxylase large chain (475 aa).

A propeptide spanning residues 1 to 2 (MS) is cleaved from the precursor. Proline 3 carries the post-translational modification N-acetylproline. An N6,N6,N6-trimethyllysine modification is found at lysine 14. Substrate contacts are provided by asparagine 123 and threonine 173. Lysine 175 (proton acceptor) is an active-site residue. A substrate-binding site is contributed by lysine 177. Residues lysine 201, aspartate 203, and glutamate 204 each coordinate Mg(2+). The residue at position 201 (lysine 201) is an N6-carboxylysine. The active-site Proton acceptor is histidine 294. Arginine 295, histidine 327, and serine 379 together coordinate substrate.

The protein belongs to the RuBisCO large chain family. Type I subfamily. Heterohexadecamer of 8 large chains and 8 small chains; disulfide-linked. The disulfide link is formed within the large subunit homodimers. Mg(2+) serves as cofactor. The disulfide bond which can form in the large chain dimeric partners within the hexadecamer appears to be associated with oxidative stress and protein turnover.

The protein resides in the plastid. It localises to the chloroplast. It catalyses the reaction 2 (2R)-3-phosphoglycerate + 2 H(+) = D-ribulose 1,5-bisphosphate + CO2 + H2O. The enzyme catalyses D-ribulose 1,5-bisphosphate + O2 = 2-phosphoglycolate + (2R)-3-phosphoglycerate + 2 H(+). RuBisCO catalyzes two reactions: the carboxylation of D-ribulose 1,5-bisphosphate, the primary event in carbon dioxide fixation, as well as the oxidative fragmentation of the pentose substrate in the photorespiration process. Both reactions occur simultaneously and in competition at the same active site. This Alnus incana (White alder) protein is Ribulose bisphosphate carboxylase large chain.